Reading from the N-terminus, the 234-residue chain is Leucyl/phenylalanyl-tRNA--protein transferase (234 aa).

The protein belongs to the L/F-transferase family.

It localises to the cytoplasm. The enzyme catalyses N-terminal L-lysyl-[protein] + L-leucyl-tRNA(Leu) = N-terminal L-leucyl-L-lysyl-[protein] + tRNA(Leu) + H(+). It carries out the reaction N-terminal L-arginyl-[protein] + L-leucyl-tRNA(Leu) = N-terminal L-leucyl-L-arginyl-[protein] + tRNA(Leu) + H(+). The catalysed reaction is L-phenylalanyl-tRNA(Phe) + an N-terminal L-alpha-aminoacyl-[protein] = an N-terminal L-phenylalanyl-L-alpha-aminoacyl-[protein] + tRNA(Phe). Functions in the N-end rule pathway of protein degradation where it conjugates Leu, Phe and, less efficiently, Met from aminoacyl-tRNAs to the N-termini of proteins containing an N-terminal arginine or lysine. The polypeptide is Leucyl/phenylalanyl-tRNA--protein transferase (Salmonella agona (strain SL483)).